The following is a 250-amino-acid chain: 7-cyano-7-deazaguanine synthase (250 aa).

21–31 (FSGGQDSSVCL) contacts ATP. 4 residues coordinate Zn(2+): Cys-209, Cys-224, Cys-227, and Cys-230.

The protein belongs to the QueC family. Zn(2+) is required as a cofactor.

It catalyses the reaction 7-carboxy-7-deazaguanine + NH4(+) + ATP = 7-cyano-7-deazaguanine + ADP + phosphate + H2O + H(+). The protein operates within purine metabolism; 7-cyano-7-deazaguanine biosynthesis. Functionally, catalyzes the ATP-dependent conversion of 7-carboxy-7-deazaguanine (CDG) to 7-cyano-7-deazaguanine (preQ(0)). This chain is 7-cyano-7-deazaguanine synthase, found in Caulobacter sp. (strain K31).